The following is a 659-amino-acid chain: uncharacterized protein (659 aa).

16 helical membrane-spanning segments follow: residues 24–44 (TTLM…YGLF), 71–91 (FGAS…VMMV), 115–135 (IGWL…DSGV), 157–177 (RAWI…RVII), 183–203 (FVLL…GNAG), 214–234 (AVIV…TAAL), 242–262 (AVLI…AELV), 279–299 (LGLV…WALV), 311–331 (LTAL…VQTA), 365–385 (FDSL…AGFV), 393–413 (TWPV…VFTS), 433–453 (MTLN…TLAL), 490–510 (FILF…DTLV), 517–537 (EFMA…IIGI), 550–570 (IGLL…LMTM), and 596–616 (IGGA…IVAL).

To M.tuberculosis Rv0102.

The protein localises to the cell membrane. This is an uncharacterized protein from Mycobacterium leprae (strain TN).